We begin with the raw amino-acid sequence, 133 residues long: Acyl-CoA thioester hydrolase YciA (133 aa).

In terms of domain architecture, HotDog ACOT-type spans 8–123 (PQGELVLRTL…LFIYVAVDPD (116 aa)).

Belongs to the acyl coenzyme A hydrolase family.

In terms of biological role, catalyzes the hydrolysis of the thioester bond in palmitoyl-CoA and malonyl-CoA. The polypeptide is Acyl-CoA thioester hydrolase YciA (yciA) (Salmonella typhi).